Here is a 213-residue protein sequence, read N- to C-terminus: Reticulon-3 (213 aa).

The span at 1 to 16 shows a compositional bias: polar residues; sequence MADTSGPQSSHISSSA. A disordered region spans residues 1–20; that stretch reads MADTSGPQSSHISSSAGEKG. The region spanning 25-213 is the Reticulon domain; sequence VQDLLYWRDV…LPGALKKKSE (189 aa). A run of 2 helical transmembrane segments spans residues 45–65 and 154–174; these read MVLLLSLAAFSIISVISYLVL and VFNGITLLILGVLLAFTAPIV.

As to quaternary structure, homodimer.

It is found in the endoplasmic reticulum membrane. Its subcellular location is the golgi apparatus membrane. Its function is as follows. May be involved in membrane trafficking in the early secretory pathway. This chain is Reticulon-3 (rtn3), found in Xenopus tropicalis (Western clawed frog).